A 916-amino-acid polypeptide reads, in one-letter code: Inter-alpha-trypsin inhibitor heavy chain H4 (916 aa).

A signal peptide spans 1-27; the sequence is MKTPAPGRIHSIVLVLLSLAVLQTSKA. One can recognise a VIT domain in the interval 28 to 149; that stretch reads QKVQNDIDIY…KVTFELVYEE (122 aa). N-linked (GlcNAc...) asparagine glycans are attached at residues Asn-82 and Asn-208. The region spanning 275 to 458 is the VWFA domain; it reads NVIFVIDKSG…LQLQDFYQEV (184 aa). A glycan (N-linked (GlcNAc...) asparagine) is linked at Asn-518. 2 disordered regions span residues 597–616 and 678–701; these read PEGQ…ESRG and PLAP…TDFR. Residues 678 to 689 are compositionally biased toward low complexity; it reads PLAPASAPSPTS. An O-linked (GalNAc...) serine glycan is attached at Ser-683. Residues Thr-705, Thr-706, and Thr-708 are each glycosylated (O-linked (GalNAc...) threonine). Cysteines 733 and 911 form a disulfide.

The protein belongs to the ITIH family. In terms of assembly, interacts (via C-terminus) with DNAJC1 (via SANT 2 domain). Appears to be both N- and O-glycosylated.

It is found in the secreted. Its function is as follows. Type II acute-phase protein (APP) involved in inflammatory responses to trauma. May also play a role in liver development or regeneration. In Bos taurus (Bovine), this protein is Inter-alpha-trypsin inhibitor heavy chain H4 (ITIH4).